The chain runs to 507 residues: ATP synthase subunit alpha, mitochondrial (507 aa).

Gly-171–Thr-178 is an ATP binding site.

This sequence belongs to the ATPase alpha/beta chains family. F-type ATPases have 2 components, CF(1) - the catalytic core - and CF(0) - the membrane proton channel. CF(1) has five subunits: alpha(3), beta(3), gamma(1), delta(1), epsilon(1). CF(0) has three main subunits: a, b and c.

It is found in the mitochondrion. Its subcellular location is the mitochondrion inner membrane. Mitochondrial membrane ATP synthase (F(1)F(0) ATP synthase or Complex V) produces ATP from ADP in the presence of a proton gradient across the membrane which is generated by electron transport complexes of the respiratory chain. F-type ATPases consist of two structural domains, F(1) - containing the extramembraneous catalytic core, and F(0) - containing the membrane proton channel, linked together by a central stalk and a peripheral stalk. During catalysis, ATP synthesis in the catalytic domain of F(1) is coupled via a rotary mechanism of the central stalk subunits to proton translocation. Subunits alpha and beta form the catalytic core in F(1). Rotation of the central stalk against the surrounding alpha(3)beta(3) subunits leads to hydrolysis of ATP in three separate catalytic sites on the beta subunits. Subunit alpha does not bear the catalytic high-affinity ATP-binding sites. This Raphanus sativus (Radish) protein is ATP synthase subunit alpha, mitochondrial (ATPA).